A 495-amino-acid chain; its full sequence is MADRNLRDLLAPWVQDAPACALREMILDSRVAAAGDLFVAIVGHKADGRRYIPQAIAQGVAAIVAEADGEAADGTVREMHGVPVVYLSSLNQRLSALAGRFYQQPAEKLQLIGVTGTNGKTTTTQLLAQWSQALGEMSAVMGTVGNGLLGRAIPTENTTGSAVDVQQVLSQLVEQGATFAAMEVSSHGLVQNRVAALPFTAAVFTNLSRDHLDYHGDMESYEAAKWLLFAEHRVGQMIINADDEVGLRWLAKLPDAVAVTMENNLVPGCRGRWLKATQIDYHDNGATIAFDSSWGQGEIESRLMGAFNVSNMLLALATLLSLGYPLDKLVIAGSQLQPVCGRMEVFHAEGKPTVVVDYAHTPDALEKALEAARLHCQGKLWCVFGCGGDRDKGKRPLMGGIAEQLADRVVVTDDNPRSEEPQAIVADILSGLLDAGRVQVIHGRAEAVTSAIMQAQENDVVLVAGKGHEDYQLVGNQRLDYSDRITVARLLGVIA.

UDP-N-acetyl-alpha-D-muramoyl-L-alanyl-D-glutamate-binding positions include L27, S29, and 44 to 46; that span reads HKA. 116 to 122 lines the ATP pocket; the sequence is GTNGKTT. UDP-N-acetyl-alpha-D-muramoyl-L-alanyl-D-glutamate-binding positions include N157, 158 to 159, S185, Q191, and R193; that span reads TT. An N6-carboxylysine modification is found at K225. Residues R390, 414–417, G465, and E469 each bind meso-2,6-diaminopimelate; that span reads DNPR. The Meso-diaminopimelate recognition motif signature appears at 414-417; the sequence is DNPR.

The protein belongs to the MurCDEF family. MurE subfamily. Mg(2+) is required as a cofactor. Carboxylation is probably crucial for Mg(2+) binding and, consequently, for the gamma-phosphate positioning of ATP.

The protein resides in the cytoplasm. The enzyme catalyses UDP-N-acetyl-alpha-D-muramoyl-L-alanyl-D-glutamate + meso-2,6-diaminopimelate + ATP = UDP-N-acetyl-alpha-D-muramoyl-L-alanyl-gamma-D-glutamyl-meso-2,6-diaminopimelate + ADP + phosphate + H(+). It functions in the pathway cell wall biogenesis; peptidoglycan biosynthesis. Functionally, catalyzes the addition of meso-diaminopimelic acid to the nucleotide precursor UDP-N-acetylmuramoyl-L-alanyl-D-glutamate (UMAG) in the biosynthesis of bacterial cell-wall peptidoglycan. The polypeptide is UDP-N-acetylmuramoyl-L-alanyl-D-glutamate--2,6-diaminopimelate ligase (Pectobacterium atrosepticum (strain SCRI 1043 / ATCC BAA-672) (Erwinia carotovora subsp. atroseptica)).